Reading from the N-terminus, the 102-residue chain is Protein PDF (102 aa).

The N-terminal stretch at 1-24 (MARYTYLVALVLLAICCQWGYCGA) is a signal peptide. Alanine amide is present on Ala100.

Belongs to the arthropod PDH family. Predominantly expressed in adult head. Expressed at higher level in males than in females. In adult brain, it is specifically expressed in the ventral lateral neurons (LNvs) as well as in 2-4 tritocerebral cells and 4-6 abdominal cells.

The protein localises to the secreted. Neuropeptide PDF is the main transmitter regulating circadian locomotor rhythms. Required to maintain behavioral rhythms under constant conditions by coordinating pacemaker interactions in the circadian system. Together with CCHa1, involved in regulating intensity and periodicity of daytime activity, possibly by modulating rhythmic expression of circadian protein PER/period in a subset of clock neurons, but not TIM/timeless. Acts on small and large ventral lateral neurons to control sleep and regulates the state transition from sleep to wake. This is Protein PDF (Pdf) from Drosophila melanogaster (Fruit fly).